Reading from the N-terminus, the 161-residue chain is Ribosome maturation factor RimP (161 aa).

Belongs to the RimP family.

Its subcellular location is the cytoplasm. In terms of biological role, required for maturation of 30S ribosomal subunits. The sequence is that of Ribosome maturation factor RimP from Rickettsia africae (strain ESF-5).